A 506-amino-acid polypeptide reads, in one-letter code: Anaerobic nitric oxide reductase transcription regulator NorR (506 aa).

Asp57 carries the post-translational modification 4-aspartylphosphate. One can recognise a Sigma-54 factor interaction domain in the interval 187–416 (MIGLSPAMTQ…LEHAIHRAVV (230 aa)). ATP is bound by residues 215–222 (GETGTGKE) and 278–287 (ADNGTLFLDE). Positions 481-500 (WAASARALETDVANLHRLAK) form a DNA-binding region, H-T-H motif.

It participates in nitrogen metabolism; nitric oxide reduction. Required for the expression of anaerobic nitric oxide (NO) reductase, acts as a transcriptional activator for at least the norVW operon. Activation also requires sigma-54. In Salmonella paratyphi C (strain RKS4594), this protein is Anaerobic nitric oxide reductase transcription regulator NorR.